The chain runs to 367 residues: Peptide chain release factor 2 (367 aa).

Gln254 is subject to N5-methylglutamine.

This sequence belongs to the prokaryotic/mitochondrial release factor family. Methylated by PrmC. Methylation increases the termination efficiency of RF2.

Its subcellular location is the cytoplasm. Peptide chain release factor 2 directs the termination of translation in response to the peptide chain termination codons UGA and UAA. The polypeptide is Peptide chain release factor 2 (Neisseria gonorrhoeae (strain ATCC 700825 / FA 1090)).